A 469-amino-acid polypeptide reads, in one-letter code: Putative arginine/ornithine antiporter (469 aa).

Helical transmembrane passes span 8–28 (GFWLLTAFVVGNMVGSGIFSL), 44–64 (AWLLTGAGVLMIALVFGHLSI), 90–110 (AGFTMVWGYWVASWISNVAII), 144–164 (LTFAVCTILLWGTHAILVASI), 179–199 (VLGFVFFIVAGLFVFQTSLFG), 213–233 (IGIGGQVHNAAISTLWAFVGI), 254–274 (ITGLLIALSIYIIVTLITMGV), 301–321 (VIMALLAILCLFGTMLGWILL), 347–367 (SPVIALIITNVMSQVFIFSVI), 375–395 (FTFLTTAATLAYLIPYLVSAI), 417–437 (DGLIAILACAYSVFVIVTGTA), and 439–459 (LTTFILGIGLFFVGLIVYPFV).

It belongs to the amino acid-polyamine-organocation (APC) superfamily. Basic amino acid/polyamine antiporter (APA) (TC 2.A.3.2) family.

It localises to the cell membrane. It catalyses the reaction L-ornithine(in) + L-arginine(out) = L-ornithine(out) + L-arginine(in). Functionally, catalyzes electroneutral exchange between L-arginine and L-ornithine. The chain is Putative arginine/ornithine antiporter (yvsH) from Bacillus subtilis (strain 168).